The following is a 239-amino-acid chain: Phosphoribosylaminoimidazole-succinocarboxamide synthase (239 aa).

It belongs to the SAICAR synthetase family.

The catalysed reaction is 5-amino-1-(5-phospho-D-ribosyl)imidazole-4-carboxylate + L-aspartate + ATP = (2S)-2-[5-amino-1-(5-phospho-beta-D-ribosyl)imidazole-4-carboxamido]succinate + ADP + phosphate + 2 H(+). It participates in purine metabolism; IMP biosynthesis via de novo pathway; 5-amino-1-(5-phospho-D-ribosyl)imidazole-4-carboxamide from 5-amino-1-(5-phospho-D-ribosyl)imidazole-4-carboxylate: step 1/2. The sequence is that of Phosphoribosylaminoimidazole-succinocarboxamide synthase from Bacillus mycoides (strain KBAB4) (Bacillus weihenstephanensis).